Here is a 368-residue protein sequence, read N- to C-terminus: Aminomethyltransferase (368 aa).

It belongs to the GcvT family. In terms of assembly, the glycine cleavage system is composed of four proteins: P, T, L and H.

It catalyses the reaction N(6)-[(R)-S(8)-aminomethyldihydrolipoyl]-L-lysyl-[protein] + (6S)-5,6,7,8-tetrahydrofolate = N(6)-[(R)-dihydrolipoyl]-L-lysyl-[protein] + (6R)-5,10-methylene-5,6,7,8-tetrahydrofolate + NH4(+). Functionally, the glycine cleavage system catalyzes the degradation of glycine. The sequence is that of Aminomethyltransferase from Xylella fastidiosa (strain M23).